Reading from the N-terminus, the 362-residue chain is Phosphoserine aminotransferase (362 aa).

Arginine 43 serves as a coordination point for L-glutamate. Pyridoxal 5'-phosphate contacts are provided by residues 77-78 (AS), tryptophan 103, threonine 153, aspartate 173, and glutamine 196. Residue lysine 197 is modified to N6-(pyridoxal phosphate)lysine. 238–239 (NT) serves as a coordination point for pyridoxal 5'-phosphate.

The protein belongs to the class-V pyridoxal-phosphate-dependent aminotransferase family. SerC subfamily. Homodimer. Requires pyridoxal 5'-phosphate as cofactor.

It localises to the cytoplasm. The enzyme catalyses O-phospho-L-serine + 2-oxoglutarate = 3-phosphooxypyruvate + L-glutamate. It carries out the reaction 4-(phosphooxy)-L-threonine + 2-oxoglutarate = (R)-3-hydroxy-2-oxo-4-phosphooxybutanoate + L-glutamate. It participates in amino-acid biosynthesis; L-serine biosynthesis; L-serine from 3-phospho-D-glycerate: step 2/3. In terms of biological role, catalyzes the reversible conversion of 3-phosphohydroxypyruvate to phosphoserine and of 3-hydroxy-2-oxo-4-phosphonooxybutanoate to phosphohydroxythreonine. The polypeptide is Phosphoserine aminotransferase (Lysinibacillus sphaericus (strain C3-41)).